The sequence spans 244 residues: Orotidine 5'-phosphate decarboxylase (244 aa).

Substrate-binding positions include Asp-12, Lys-34, 61–70, Thr-125, Arg-187, Gln-196, Gly-216, and Arg-217; that span reads DLKLFDIPNT. The active-site Proton donor is the Lys-63.

This sequence belongs to the OMP decarboxylase family. Type 1 subfamily. In terms of assembly, homodimer.

The catalysed reaction is orotidine 5'-phosphate + H(+) = UMP + CO2. The protein operates within pyrimidine metabolism; UMP biosynthesis via de novo pathway; UMP from orotate: step 2/2. In terms of biological role, catalyzes the decarboxylation of orotidine 5'-monophosphate (OMP) to uridine 5'-monophosphate (UMP). This Dictyoglomus turgidum (strain DSM 6724 / Z-1310) protein is Orotidine 5'-phosphate decarboxylase.